The following is a 449-amino-acid chain: Major capsid protein (449 aa).

The region spanning 349-427 (AVTQVIVSPA…TVDIGTADEP (79 aa)) is the BIG2 domain.

It belongs to the phi29likevirus major capsid protein family. As to quaternary structure, homohexamer. Homopentamer. The prolate capsid is composed of pentamers and hexamers of the capsid protein.

The protein resides in the virion. In terms of biological role, assembles to form a prolate capsid shell of about 54 nm in length and 45 nm in width, with a T=3, Q=5 symmetry. This chain is Major capsid protein (8), found in Bacillus subtilis (Bacteriophage B103).